A 283-amino-acid polypeptide reads, in one-letter code: ATP phosphoribosyltransferase (283 aa).

Belongs to the ATP phosphoribosyltransferase family. Long subfamily. The cofactor is Mg(2+).

It is found in the cytoplasm. The catalysed reaction is 1-(5-phospho-beta-D-ribosyl)-ATP + diphosphate = 5-phospho-alpha-D-ribose 1-diphosphate + ATP. The protein operates within amino-acid biosynthesis; L-histidine biosynthesis; L-histidine from 5-phospho-alpha-D-ribose 1-diphosphate: step 1/9. Its activity is regulated as follows. Feedback inhibited by histidine. Catalyzes the condensation of ATP and 5-phosphoribose 1-diphosphate to form N'-(5'-phosphoribosyl)-ATP (PR-ATP). Has a crucial role in the pathway because the rate of histidine biosynthesis seems to be controlled primarily by regulation of HisG enzymatic activity. This chain is ATP phosphoribosyltransferase, found in Methanopyrus kandleri (strain AV19 / DSM 6324 / JCM 9639 / NBRC 100938).